The following is a 359-amino-acid chain: 1-deoxy-D-xylulose 5-phosphate reductoisomerase (359 aa).

Residues T7, G8, S9, I10, A31, N33, and N111 each contribute to the NADPH site. Residue K112 participates in 1-deoxy-D-xylulose 5-phosphate binding. E113 is a binding site for NADPH. D131 provides a ligand contact to Mn(2+). The 1-deoxy-D-xylulose 5-phosphate site is built by S132, E133, S155, and H178. A Mn(2+)-binding site is contributed by E133. Residue G184 participates in NADPH binding. Residues S191, N196, K197, and E200 each contribute to the 1-deoxy-D-xylulose 5-phosphate site. E200 serves as a coordination point for Mn(2+).

The protein belongs to the DXR family. The cofactor is Mg(2+). Mn(2+) is required as a cofactor.

It catalyses the reaction 2-C-methyl-D-erythritol 4-phosphate + NADP(+) = 1-deoxy-D-xylulose 5-phosphate + NADPH + H(+). The protein operates within isoprenoid biosynthesis; isopentenyl diphosphate biosynthesis via DXP pathway; isopentenyl diphosphate from 1-deoxy-D-xylulose 5-phosphate: step 1/6. In terms of biological role, catalyzes the NADPH-dependent rearrangement and reduction of 1-deoxy-D-xylulose-5-phosphate (DXP) to 2-C-methyl-D-erythritol 4-phosphate (MEP). The polypeptide is 1-deoxy-D-xylulose 5-phosphate reductoisomerase (Campylobacter hominis (strain ATCC BAA-381 / DSM 21671 / CCUG 45161 / LMG 19568 / NCTC 13146 / CH001A)).